A 254-amino-acid polypeptide reads, in one-letter code: Peptide methionine sulfoxide reductase A5 (254 aa).

Positions 1-33 are cleaved as a signal peptide; that stretch reads MAISLKRNRFFIPYTNLVFFFFLCVSLLDKTVS.

This sequence belongs to the MsrA Met sulfoxide reductase family.

It carries out the reaction L-methionyl-[protein] + [thioredoxin]-disulfide + H2O = L-methionyl-(S)-S-oxide-[protein] + [thioredoxin]-dithiol. It catalyses the reaction [thioredoxin]-disulfide + L-methionine + H2O = L-methionine (S)-S-oxide + [thioredoxin]-dithiol. Catalyzes the reduction of methionine sulfoxide (MetSO) to methionine in proteins. Plays a protective role against oxidative stress by restoring activity to proteins that have been inactivated by methionine oxidation. MSRA family specifically reduces the MetSO S-enantiomer. The sequence is that of Peptide methionine sulfoxide reductase A5 (MSRA5) from Arabidopsis thaliana (Mouse-ear cress).